The chain runs to 248 residues: Adenosylcobinamide-GDP ribazoletransferase (248 aa).

7 helical membrane-spanning segments follow: residues 32-52 (FPLV…IGMV), 60-80 (ALLV…DGLA), 103-123 (AVGS…WIAL), 134-154 (WIVS…SVMT), 170-190 (AGGW…VLVM), 195-215 (LPIV…GMLA), and 227-247 (LGAS…LLLF).

Belongs to the CobS family. It depends on Mg(2+) as a cofactor.

It is found in the cell inner membrane. The enzyme catalyses alpha-ribazole + adenosylcob(III)inamide-GDP = adenosylcob(III)alamin + GMP + H(+). The catalysed reaction is alpha-ribazole 5'-phosphate + adenosylcob(III)inamide-GDP = adenosylcob(III)alamin 5'-phosphate + GMP + H(+). Its pathway is cofactor biosynthesis; adenosylcobalamin biosynthesis; adenosylcobalamin from cob(II)yrinate a,c-diamide: step 7/7. Its function is as follows. Joins adenosylcobinamide-GDP and alpha-ribazole to generate adenosylcobalamin (Ado-cobalamin). Also synthesizes adenosylcobalamin 5'-phosphate from adenosylcobinamide-GDP and alpha-ribazole 5'-phosphate. The protein is Adenosylcobinamide-GDP ribazoletransferase of Prosthecochloris aestuarii (strain DSM 271 / SK 413).